We begin with the raw amino-acid sequence, 350 residues long: D-alanine--D-alanine ligase (350 aa).

An ATP-grasp domain is found at 134–337 (KIFAAQRGVK…LPKKHSIKVS (204 aa)). An ATP-binding site is contributed by 160–212 (IAYPIILKPARLGSSIGVSVINEEKELDYGRDLAFEYDDTIIAESFKSGVKEY). Residues Asp-289, Glu-301, and Asn-303 each contribute to the Mg(2+) site.

The protein belongs to the D-alanine--D-alanine ligase family. The cofactor is Mg(2+). Requires Mn(2+) as cofactor.

Its subcellular location is the cytoplasm. The enzyme catalyses 2 D-alanine + ATP = D-alanyl-D-alanine + ADP + phosphate + H(+). It functions in the pathway cell wall biogenesis; peptidoglycan biosynthesis. In terms of biological role, cell wall formation. The protein is D-alanine--D-alanine ligase of Helicobacter hepaticus (strain ATCC 51449 / 3B1).